The chain runs to 208 residues: Frataxin, mitochondrial (208 aa).

The N-terminal 40 residues, 1-40, are a transit peptide targeting the mitochondrion; that stretch reads MWTFGRRAAAGLLPRTASRASAWVRNPRGRERIGTCGRRG.

The protein belongs to the frataxin family. Component of the mitochondrial core iron-sulfur cluster (ISC) complex composed of NFS1, LYRM4, NDUFAB1, ISCU, FXN, and FDX2; this complex is a heterohexamer containing two copies of each monomer. Homodimer. Monomer (probable predominant form). Oligomer. Monomers and polymeric aggregates of &gt;1 MDa have been isolated from mitochondria. A small fraction of heterologous overexpressed recombinant frataxin forms high-molecular weight aggregates that incorporate iron. Interacts with LYRM4. Interacts (via ferrous form) with ISCU; the interaction is possible when both are bound to the dimeric form of the cysteine desulfurase complex (NFS1:LYRM4) and the interaction enhances FXN interaction to the dimeric form of the cysteine desulfurase complex (NFS1:LYRM4). Interacts with FECH; one iron-bound FXN monomer seems to interact with a FECH homodimer. Interacts with SDHA and SDHB. Interacts with ACO2; the interaction is dependent on citrate. Interacts with HSPA9. As to quaternary structure, interacts with ACO1. Interacts with ISCU (cytoplasmic form). In terms of processing, processed in two steps by mitochondrial processing peptidase (MPP). MPP first cleaves the precursor to intermediate form and subsequently converts the intermediate to yield frataxin mature form (frataxin(81-210)) which is the predominant form. The additional forms, frataxin(56-210) and frataxin(78-210), seem to be produced when the normal maturation process is impaired; their physiological relevance is unsure.

The protein resides in the mitochondrion. It localises to the cytoplasm. It is found in the cytosol. It carries out the reaction 4 Fe(2+) + O2 + 4 H(+) = 4 Fe(3+) + 2 H2O. Functions as an activator of persulfide transfer to the scaffoding protein ISCU as component of the core iron-sulfur cluster (ISC) assembly complex and participates to the [2Fe-2S] cluster assembly. Accelerates sulfur transfer from NFS1 persulfide intermediate to ISCU and to small thiols such as L-cysteine and glutathione leading to persulfuration of these thiols and ultimately sulfide release. Binds ferrous ion and is released from FXN upon the addition of both L-cysteine and reduced FDX2 during [2Fe-2S] cluster assembly. The core iron-sulfur cluster (ISC) assembly complex is involved in the de novo synthesis of a [2Fe-2S] cluster, the first step of the mitochondrial iron-sulfur protein biogenesis. This process is initiated by the cysteine desulfurase complex (NFS1:LYRM4:NDUFAB1) that produces persulfide which is delivered on the scaffold protein ISCU in a FXN-dependent manner. Then this complex is stabilized by FDX2 which provides reducing equivalents to accomplish the [2Fe-2S] cluster assembly. Finally, the [2Fe-2S] cluster is transferred from ISCU to chaperone proteins, including HSCB, HSPA9 and GLRX5. May play a role in the protection against iron-catalyzed oxidative stress through its ability to catalyze the oxidation of Fe(2+) to Fe(3+); the oligomeric form but not the monomeric form has in vitro ferroxidase activity. May be able to store large amounts of iron in the form of a ferrihydrite mineral by oligomerization; however, the physiological relevance is unsure as reports are conflicting and the function has only been shown using heterologous overexpression systems. May function as an iron chaperone protein that protects the aconitase [4Fe-4S]2+ cluster from disassembly and promotes enzyme reactivation. May play a role as a high affinity iron binding partner for FECH that is capable of both delivering iron to ferrochelatase and mediating the terminal step in mitochondrial heme biosynthesis. In terms of biological role, modulates the RNA-binding activity of ACO1. May be involved in the cytoplasmic iron-sulfur protein biogenesis. May contribute to oxidative stress resistance and overall cell survival. This is Frataxin, mitochondrial from Rattus norvegicus (Rat).